The primary structure comprises 400 residues: Enoyl-[acyl-carrier-protein] reductase [NADH] 1 (400 aa).

Residues 48–53 (GASSGY), 74–75 (FE), 111–112 (DA), and 139–140 (LA) contribute to the NAD(+) site. Substrate is bound at residue tyrosine 225. Tyrosine 235 (proton donor) is an active-site residue. NAD(+) contacts are provided by residues lysine 244 and 273 to 275 (VVT).

It belongs to the TER reductase family. In terms of assembly, monomer.

It catalyses the reaction a 2,3-saturated acyl-[ACP] + NAD(+) = a (2E)-enoyl-[ACP] + NADH + H(+). It functions in the pathway lipid metabolism; fatty acid biosynthesis. Functionally, involved in the final reduction of the elongation cycle of fatty acid synthesis (FAS II). Catalyzes the reduction of a carbon-carbon double bond in an enoyl moiety that is covalently linked to an acyl carrier protein (ACP). The chain is Enoyl-[acyl-carrier-protein] reductase [NADH] 1 from Vibrio vulnificus (strain CMCP6).